The primary structure comprises 484 residues: tRNA sulfurtransferase (484 aa).

Positions 61-165 (ILLVELLGRI…NDKMMLIKAR (105 aa)) constitute a THUMP domain. Residues 183–184 (LI), Lys265, Gly287, and Gln296 each bind ATP. A disulfide bridge links Cys344 with Cys456. A Rhodanese domain is found at 404–484 (LSANDVILDI…DNVKVLNKIS (81 aa)). Cys456 acts as the Cysteine persulfide intermediate in catalysis.

Belongs to the ThiI family.

It localises to the cytoplasm. The enzyme catalyses [ThiI sulfur-carrier protein]-S-sulfanyl-L-cysteine + a uridine in tRNA + 2 reduced [2Fe-2S]-[ferredoxin] + ATP + H(+) = [ThiI sulfur-carrier protein]-L-cysteine + a 4-thiouridine in tRNA + 2 oxidized [2Fe-2S]-[ferredoxin] + AMP + diphosphate. The catalysed reaction is [ThiS sulfur-carrier protein]-C-terminal Gly-Gly-AMP + S-sulfanyl-L-cysteinyl-[cysteine desulfurase] + AH2 = [ThiS sulfur-carrier protein]-C-terminal-Gly-aminoethanethioate + L-cysteinyl-[cysteine desulfurase] + A + AMP + 2 H(+). It functions in the pathway cofactor biosynthesis; thiamine diphosphate biosynthesis. In terms of biological role, catalyzes the ATP-dependent transfer of a sulfur to tRNA to produce 4-thiouridine in position 8 of tRNAs, which functions as a near-UV photosensor. Also catalyzes the transfer of sulfur to the sulfur carrier protein ThiS, forming ThiS-thiocarboxylate. This is a step in the synthesis of thiazole, in the thiamine biosynthesis pathway. The sulfur is donated as persulfide by IscS. This Histophilus somni (strain 129Pt) (Haemophilus somnus) protein is tRNA sulfurtransferase.